The sequence spans 305 residues: ATP synthase gamma chain (305 aa).

It belongs to the ATPase gamma chain family. As to quaternary structure, F-type ATPases have 2 components, CF(1) - the catalytic core - and CF(0) - the membrane proton channel. CF(1) has five subunits: alpha(3), beta(3), gamma(1), delta(1), epsilon(1). CF(0) has three main subunits: a, b and c.

It localises to the cell membrane. Produces ATP from ADP in the presence of a proton gradient across the membrane. The gamma chain is believed to be important in regulating ATPase activity and the flow of protons through the CF(0) complex. The chain is ATP synthase gamma chain from Streptomyces coelicolor (strain ATCC BAA-471 / A3(2) / M145).